Consider the following 199-residue polypeptide: MIQISDTAQTHFRKLIEREGVPGMGVRLSAVDPGTPRADARLEFAEPTDLLGDEWAVDCDGFTLYVDAGSVGWLDGAEIDIVAGSAGTQQLTIKAPRIKGEAPGDAASLVERVHWVVENEINPQLASHGGKVAVQEVSAEGVVLLRFGGGCQGCGMADVTLKQGIEKTLMGRVPGVTAVRDATDHDSGHAPYIPRGNAA.

Residues Cys151 and Cys154 each coordinate [4Fe-4S] cluster.

It belongs to the NfuA family. Homodimer. Requires [4Fe-4S] cluster as cofactor.

Involved in iron-sulfur cluster biogenesis. Binds a 4Fe-4S cluster, can transfer this cluster to apoproteins, and thereby intervenes in the maturation of Fe/S proteins. Could also act as a scaffold/chaperone for damaged Fe/S proteins. The chain is Fe/S biogenesis protein NfuA from Stenotrophomonas maltophilia (strain K279a).